The primary structure comprises 367 residues: Pyrimidine monooxygenase RutA (367 aa).

Residues 50-51, Asn-116, Glu-125, 141-142, and Ser-191 contribute to the FMN site; these read IK and RY.

The protein belongs to the NtaA/SnaA/DszA monooxygenase family. RutA subfamily.

The enzyme catalyses uracil + FMNH2 + NADH + O2 = (Z)-3-ureidoacrylate + FMN + NAD(+) + H2O + H(+). The catalysed reaction is thymine + FMNH2 + NADH + O2 = (Z)-2-methylureidoacrylate + FMN + NAD(+) + H2O + H(+). Functionally, catalyzes the pyrimidine ring opening between N-3 and C-4 by an unusual flavin hydroperoxide-catalyzed mechanism, adding oxygen atoms in the process to yield ureidoacrylate peracid, that immediately reacts with FMN forming ureidoacrylate and FMN-N(5)-oxide. The FMN-N(5)-oxide reacts spontaneously with NADH to produce FMN. Requires the flavin reductase RutF to regenerate FMN in vivo. This is Pyrimidine monooxygenase RutA from Allorhizobium ampelinum (strain ATCC BAA-846 / DSM 112012 / S4) (Agrobacterium vitis (strain S4)).